The sequence spans 416 residues: Inositol polyphosphate multikinase (416 aa).

Residues Met-1 to Gly-38 are disordered. Ala-2 is subject to N-acetylalanine. At Ser-7 the chain carries Phosphoserine. Position 75 (Lys-75) interacts with ATP. Arg-82 is a substrate binding site. ATP contacts are provided by residues Glu-131–Val-133 and Asp-144. Substrate-binding positions include Lys-146, Lys-160–Lys-167, and Gln-196. Positions Arg-320–His-330 match the Nuclear localization signal motif. Residue Asp-385 participates in ATP binding. His-388 serves as a coordination point for substrate.

This sequence belongs to the inositol phosphokinase (IPK) family. Requires Mg(2+) as cofactor. As to expression, ubiquitous, with the highest expression in skeletal muscle, liver, placenta, lung, peripheral blood leukocytes, kidney, spleen and colon.

The protein resides in the nucleus. It catalyses the reaction 1D-myo-inositol 1,4,5-trisphosphate + 2 ATP = 1D-myo-inositol 1,3,4,5,6-pentakisphosphate + 2 ADP + 2 H(+). It carries out the reaction 1D-myo-inositol 1,3,4,6-tetrakisphosphate + ATP = 1D-myo-inositol 1,3,4,5,6-pentakisphosphate + ADP + H(+). The catalysed reaction is 1-octadecanoyl-2-(5Z,8Z,11Z,14Z)-eicosatetraenoyl-sn-glycero-3-phospho-1D-myo-inositol 4,5-bisphosphate + ATP = 1-octadecanoyl-2-(5Z,8Z,11Z,14Z-eicosatetraenoyl)-sn-glycero-3-phospho-(1D-myo-inositol 3,4,5-triphosphate) + ADP + H(+). The enzyme catalyses a 1,2-diacyl-sn-glycero-3-phospho-(1D-myo-inositol-4,5-bisphosphate) + ATP = a 1,2-diacyl-sn-glycero-3-phospho-(1D-myo-inositol-3,4,5-trisphosphate) + ADP + H(+). It catalyses the reaction 1D-myo-inositol 1,4,5,6-tetrakisphosphate + ATP = 1D-myo-inositol 1,3,4,5,6-pentakisphosphate + ADP + H(+). It participates in phospholipid metabolism; phosphatidylinositol metabolism. With respect to regulation, inhibited by flavonoids that occupy the ATP-binding pocket. Inhibited by myricetin, quercetin, luteolin, kaempferol, isorhamnetin and diosmetin, and to a lesser degree by rhamnetin and apigenin. Its function is as follows. Inositol phosphate kinase with a broad substrate specificity. Phosphorylates inositol 1,4,5-trisphosphate (Ins(1,4,5)P3) first to inositol 1,3,4,5-tetrakisphosphate and then to inositol 1,3,4,5,6-pentakisphosphate (Ins(1,3,4,5,6)P5). Phosphorylates inositol 1,3,4,6-tetrakisphosphate (Ins(1,3,4,6)P4). Phosphorylates inositol 1,4,5,6-tetrakisphosphate (Ins(1,4,5,6)P4). Phosphorylates glycero-3-phospho-1D-myo-inositol 4,5-bisphosphate to glycero-3-phospho-1D-myo-inositol 3,4,5-trisphosphate. Plays an important role in MLKL-mediated necroptosis via its role in the biosynthesis of inositol pentakisphosphate (InsP5) and inositol hexakisphosphate (InsP6). Binding of these highly phosphorylated inositol phosphates to MLKL mediates the release of an N-terminal auto-inhibitory region, leading to activation of the kinase. Essential for activated phospho-MLKL to oligomerize and localize to the cell membrane during necroptosis. Required for normal embryonic development, probably via its role in the biosynthesis of inositol 1,3,4,5,6-pentakisphosphate (Ins(1,3,4,5,6)P5) and inositol hexakisphosphate (InsP6). In Homo sapiens (Human), this protein is Inositol polyphosphate multikinase (IPMK).